A 148-amino-acid polypeptide reads, in one-letter code: Calcium-permeable cation-selective channel WeiTsing (148 aa).

Over 1-25 the chain is Cytoplasmic; that stretch reads METVSAVNQTLPISGGEPVKFTTYS. A helical transmembrane segment spans residues 26–46; it reads AAVHKVLVMINAGILGLLQLV. At 47–51 the chain is on the lumenal side; that stretch reads SQQSS. Residues 52–72 form a helical membrane-spanning segment; it reads VLETHKAAFLCFCVFILFYAV. Residues 73-90 lie on the Cytoplasmic side of the membrane; it reads LRVREAMDVRLQPGLVPR. A helical membrane pass occupies residues 91 to 110; sequence LIGHGSHLFGGLAALVLVSV. Topologically, residues 111-116 are lumenal; sequence VSTAFS. A helical transmembrane segment spans residues 117–133; sequence IVLFLLWFIWLSAVVYL. Residues 134–148 are Cytoplasmic-facing; sequence ETNKPSACPPQLPPV.

In terms of assembly, forms pentamers with a central pore to produce an ion channel.

It is found in the endoplasmic reticulum membrane. The catalysed reaction is Ca(2+)(in) = Ca(2+)(out). It catalyses the reaction Na(+)(in) = Na(+)(out). Calcium-permeable cation-selective channel conferring a broad-spectrum clubroot resistance by supporting cytosolic Ca(2+) increase in root pericycle cells. Triggers immunity toward fungal pathogens such as Plasmodiophora brassicae (Pb) and induces defenses. Also permeable to sodium ion Na(+) and possibly other cations. The polypeptide is Calcium-permeable cation-selective channel WeiTsing (Arabidopsis thaliana (Mouse-ear cress)).